A 257-amino-acid polypeptide reads, in one-letter code: BTB/POZ domain-containing protein kctd15-like (257 aa).

Phosphoserine is present on residues serine 9 and serine 12. Residues 30–100 form the BTB domain; it reads APVHIDVGGH…LRTSKLLLPE (71 aa).

The polypeptide is BTB/POZ domain-containing protein kctd15-like (kctd15l) (Danio rerio (Zebrafish)).